A 362-amino-acid chain; its full sequence is Chorismate synthase (362 aa).

Residue Arg-46 participates in NADP(+) binding. FMN-binding positions include 122 to 124 (RSS), 238 to 239 (NA), Gly-278, 293 to 297 (KPTPS), and Arg-319.

This sequence belongs to the chorismate synthase family. In terms of assembly, homotetramer. The cofactor is FMNH2.

It catalyses the reaction 5-O-(1-carboxyvinyl)-3-phosphoshikimate = chorismate + phosphate. It participates in metabolic intermediate biosynthesis; chorismate biosynthesis; chorismate from D-erythrose 4-phosphate and phosphoenolpyruvate: step 7/7. Functionally, catalyzes the anti-1,4-elimination of the C-3 phosphate and the C-6 proR hydrogen from 5-enolpyruvylshikimate-3-phosphate (EPSP) to yield chorismate, which is the branch point compound that serves as the starting substrate for the three terminal pathways of aromatic amino acid biosynthesis. This reaction introduces a second double bond into the aromatic ring system. The polypeptide is Chorismate synthase (Campylobacter jejuni (strain RM1221)).